A 165-amino-acid polypeptide reads, in one-letter code: MSLNQLKAPRGANRAKKRVGRGQGSGLGKTAGRGGKGQKARSGNMHFEGFEGGQMPLQRRLPKFGFHNIFRRELEEVKVGDLQGLSGVVDPAALKSAGLVRGNRDGVVVLAGGELSSALTVKVHRVTAGARATIEKAGGKVELIPAPQTMHQKAKAAKKAAAQAK.

The segment at 1–44 is disordered; it reads MSLNQLKAPRGANRAKKRVGRGQGSGLGKTAGRGGKGQKARSGN. The segment covering 21 to 37 has biased composition (gly residues); it reads RGQGSGLGKTAGRGGKG.

It belongs to the universal ribosomal protein uL15 family. In terms of assembly, part of the 50S ribosomal subunit.

Functionally, binds to the 23S rRNA. This is Large ribosomal subunit protein uL15 from Anaeromyxobacter dehalogenans (strain 2CP-1 / ATCC BAA-258).